A 217-amino-acid chain; its full sequence is MGLRIKICGLRDPQQAIAIADLGATAIGFIAVRQSPRYVSPAQVAEIAQALQKTHPTVNRVGVFANATAEELEAYVAAGITSLQLHGDETLADCQRWRDRFPALELIKALRIRSTADLALAESFTDCVDTLLLDAYHPQMLGGTGATLDWQALQAFQPSRPWLLAGGLTPENITTALSQLHPAGIDLSSGVERSPGDKDLEKVTALFSSLARNSLLK.

It belongs to the TrpF family.

The catalysed reaction is N-(5-phospho-beta-D-ribosyl)anthranilate = 1-(2-carboxyphenylamino)-1-deoxy-D-ribulose 5-phosphate. The protein operates within amino-acid biosynthesis; L-tryptophan biosynthesis; L-tryptophan from chorismate: step 3/5. The sequence is that of N-(5'-phosphoribosyl)anthranilate isomerase from Synechococcus elongatus (strain ATCC 33912 / PCC 7942 / FACHB-805) (Anacystis nidulans R2).